The sequence spans 466 residues: Metaxin-1 (466 aa).

Residues 1–19 (MLLGGPPRSPRSGTSPKGP) are compositionally biased toward low complexity. A disordered region spans residues 1–133 (MLLGGPPRSP…AVAGGGPRQG (133 aa)). A compositionally biased stretch (polar residues) spans 20–36 (WSSTGHVQFGKSPQTWP). The segment covering 90–110 (ARGPVPRSSAASRARRSLASP) has biased composition (low complexity). Glycyl lysine isopeptide (Lys-Gly) (interchain with G-Cter in ubiquitin) cross-links involve residues Lys187, Lys190, Lys227, and Lys317. The chain crosses the membrane as a helical span at residues 421–441 (ILSVLAGLAAMVGYALLSGIV).

It belongs to the metaxin family. Interacts with MTX2/metaxin-2. Associates with the mitochondrial contact site and cristae organizing system (MICOS) complex, composed of at least MICOS10/MIC10, CHCHD3/MIC19, CHCHD6/MIC25, APOOL/MIC27, IMMT/MIC60, APOO/MIC23/MIC26 and QIL1/MIC13. This complex was also known under the names MINOS or MitOS complex. The MICOS complex associates with mitochondrial outer membrane proteins SAMM50, MTX1 and MTX2 (together described as components of the mitochondrial outer membrane sorting assembly machinery (SAM) complex) and DNAJC11, mitochondrial inner membrane protein TMEM11 and with HSPA9. The MICOS and SAM complexes together with DNAJC11 are part of a large protein complex spanning both membranes termed the mitochondrial intermembrane space bridging (MIB) complex. Interacts with ARMC1. Ubiquitinated by PRKN during mitophagy, leading to its degradation and enhancement of mitophagy. Deubiquitinated by USP30.

The protein localises to the membrane. The protein resides in the mitochondrion outer membrane. Its function is as follows. Involved in transport of proteins into the mitochondrion. Essential for embryonic development. The protein is Metaxin-1 (MTX1) of Homo sapiens (Human).